A 379-amino-acid chain; its full sequence is Anhydro-N-acetylmuramic acid kinase (379 aa).

Position 9–16 (Gly9–Asp16) interacts with ATP.

It belongs to the anhydro-N-acetylmuramic acid kinase family.

The enzyme catalyses 1,6-anhydro-N-acetyl-beta-muramate + ATP + H2O = N-acetyl-D-muramate 6-phosphate + ADP + H(+). It functions in the pathway amino-sugar metabolism; 1,6-anhydro-N-acetylmuramate degradation. Its pathway is cell wall biogenesis; peptidoglycan recycling. In terms of biological role, catalyzes the specific phosphorylation of 1,6-anhydro-N-acetylmuramic acid (anhMurNAc) with the simultaneous cleavage of the 1,6-anhydro ring, generating MurNAc-6-P. Is required for the utilization of anhMurNAc either imported from the medium or derived from its own cell wall murein, and thus plays a role in cell wall recycling. This Picosynechococcus sp. (strain ATCC 27264 / PCC 7002 / PR-6) (Agmenellum quadruplicatum) protein is Anhydro-N-acetylmuramic acid kinase.